A 360-amino-acid chain; its full sequence is D-alanine--D-alanine ligase (360 aa).

An ATP-grasp domain is found at 146–352 (KLCAVQAGIH…FTELIDRLVR (207 aa)). Residue 179–234 (KKRFAPPFFVKPANLGSSVGIAKIHSFDELENALDEACRLDVKILVEKAIEGREVE) coordinates ATP. The Mg(2+) site is built by aspartate 305, glutamate 319, and asparagine 321.

The protein belongs to the D-alanine--D-alanine ligase family. Mg(2+) is required as a cofactor. It depends on Mn(2+) as a cofactor.

The protein localises to the cytoplasm. It catalyses the reaction 2 D-alanine + ATP = D-alanyl-D-alanine + ADP + phosphate + H(+). It participates in cell wall biogenesis; peptidoglycan biosynthesis. Cell wall formation. The polypeptide is D-alanine--D-alanine ligase (Chlorobium phaeobacteroides (strain BS1)).